The sequence spans 367 residues: Phosphoribosylaminoimidazole-succinocarboxamide synthase (367 aa).

It belongs to the SAICAR synthetase family.

The enzyme catalyses 5-amino-1-(5-phospho-D-ribosyl)imidazole-4-carboxylate + L-aspartate + ATP = (2S)-2-[5-amino-1-(5-phospho-beta-D-ribosyl)imidazole-4-carboxamido]succinate + ADP + phosphate + 2 H(+). It functions in the pathway purine metabolism; IMP biosynthesis via de novo pathway; 5-amino-1-(5-phospho-D-ribosyl)imidazole-4-carboxamide from 5-amino-1-(5-phospho-D-ribosyl)imidazole-4-carboxylate: step 1/2. The chain is Phosphoribosylaminoimidazole-succinocarboxamide synthase from Psychromonas ingrahamii (strain DSM 17664 / CCUG 51855 / 37).